Here is a 533-residue protein sequence, read N- to C-terminus: Probable ADP-ribosylation factor-binding protein C25H2.16c (533 aa).

The VHS domain occupies 15–151 (ATEPYAFEPD…LLSYKGYTFP (137 aa)). The GAT domain maps to 178-305 (REAMSAKLQE…LLTQYDHLLE (128 aa)). S320 is modified (phosphoserine). Residues 417 to 532 (NNFTSTCAFE…EYTGQSSIRL (116 aa)) enclose the GAE domain.

This sequence belongs to the GGA protein family.

The protein localises to the golgi apparatus. It localises to the trans-Golgi network. Its function is as follows. May play a role in the regulation of membrane traffic through the trans-Golgi network. The polypeptide is Probable ADP-ribosylation factor-binding protein C25H2.16c (Schizosaccharomyces pombe (strain 972 / ATCC 24843) (Fission yeast)).